Here is a 269-residue protein sequence, read N- to C-terminus: GATA transcription factor 3 (269 aa).

Positions 136-143 (KPRTKRSR) match the Nuclear localization signal motif. The GATA-type zinc finger occupies 176–230 (LVFQRRCSHCGTNNTPQWRTGPVGPKTLCNACGVRFKSGRLCPEYRPADSPTFSN). Residues 245 to 269 (KSKELGEETGEASTKSDPVKFGSKW) are disordered.

The protein belongs to the type IV zinc-finger family. Class A subfamily. In terms of tissue distribution, mostly expressed in roots. Also expressed in stems, flowers and leaves.

It is found in the nucleus. Functionally, transcriptional activator that specifically binds 5'-GATA-3' or 5'-GAT-3' motifs within gene promoters. May be involved in the regulation of some light-responsive genes. This Arabidopsis thaliana (Mouse-ear cress) protein is GATA transcription factor 3 (GATA3).